We begin with the raw amino-acid sequence, 338 residues long: Mas-related G-protein coupled receptor member B2 (338 aa).

The Extracellular portion of the chain corresponds to 1-40 (MSGDFLIKNLSTSAWKTNITVLNGSYYIDTSVCVTRNQAM). N-linked (GlcNAc...) asparagine glycosylation is found at asparagine 9, asparagine 18, and asparagine 23. The chain crosses the membrane as a helical span at residues 41 to 61 (ILLSIIISLVGMGLNAIVLWF). Residues 62 to 89 (LGIRMHTNAFTVYILNLAMADFLYLCSQ) lie on the Cytoplasmic side of the membrane. Residues 90 to 110 (FVICLLIAFYIFYSIDINIPL) form a helical membrane-spanning segment. A topological domain (extracellular) is located at residue valine 111. Residues 112 to 132 (LYVVPIFAYLSGLSILSTISI) traverse the membrane as a helical segment. At 133-157 (ERCLSVIWPIWYRCKRPRHTSAITC) the chain is on the cytoplasmic side. A helical membrane pass occupies residues 158–178 (FVLWVMSLLLGLLEGKACGLL). Over 179–191 (FNSFDSYWCETFD) the chain is Extracellular. A helical membrane pass occupies residues 192–212 (VITNIWSVVFFGVLCGSSLTL). The Cytoplasmic segment spans residues 213–231 (LVRIFCGSQRIPMTRLYVT). A helical transmembrane segment spans residues 232-252 (ITLTVLVFLIFGLPFGIYWIL). Residues 253–268 (YQWISNFYYVEICNFY) are Extracellular-facing. Residues 269–289 (LEILFLSCVNSCMNPIIYFLV) traverse the membrane as a helical segment. The Cytoplasmic portion of the chain corresponds to 290 to 338 (GSIRHRRFRRKTLKLLLQRAMQDTPEEEQSGNKSSSEHPEELETVQSCS). Positions 310–338 (MQDTPEEEQSGNKSSSEHPEELETVQSCS) are disordered.

It belongs to the G-protein coupled receptor 1 family. Mas subfamily. In terms of tissue distribution, mast cell-specific.

It is found in the cell membrane. In terms of biological role, mast cell-specific receptor for basic secretagogues, i.e. cationic amphiphilic drugs, as well as endo- or exogenous peptides, consisting of a basic head group and a hydrophobic core. Recognizes and binds small molecules containing a cyclized tetrahydroisoquinoline (THIQ), such as non-steroidal neuromuscular blocking drugs (NMBDs), including tubocurarine and atracurium. In response to these compounds, mediates pseudo-allergic reactions characterized by histamine release, inflammation and airway contraction. The chain is Mas-related G-protein coupled receptor member B2 (Mrgprb2) from Mus musculus (Mouse).